We begin with the raw amino-acid sequence, 78 residues long: cAMP-dependent protein kinase inhibitor beta (78 aa).

Over residues 1-10 (MRTDSSKMTD) the composition is skewed to basic and acidic residues. A disordered region spans residues 1–78 (MRTDSSKMTD…QLEKPQNEEK (78 aa)). Residues 33 to 42 (IQSSAATDGT) are compositionally biased toward polar residues. A compositionally biased stretch (basic and acidic residues) spans 53–78 (SVKEDAKEKDEKTTQDQLEKPQNEEK).

It belongs to the PKI family.

In terms of biological role, extremely potent competitive inhibitor of cAMP-dependent protein kinase activity, this protein interacts with the catalytic subunit of the enzyme after the cAMP-induced dissociation of its regulatory chains. The sequence is that of cAMP-dependent protein kinase inhibitor beta (PKIB) from Homo sapiens (Human).